We begin with the raw amino-acid sequence, 427 residues long: Adenylosuccinate synthetase (427 aa).

Residues glycine 12–lysine 18 and glycine 40–threonine 42 contribute to the GTP site. Aspartate 13 functions as the Proton acceptor in the catalytic mechanism. Aspartate 13 and glycine 40 together coordinate Mg(2+). IMP contacts are provided by residues aspartate 13 to lysine 16, asparagine 38 to histidine 41, threonine 126, arginine 140, glutamine 221, threonine 236, and arginine 299. Histidine 41 (proton donor) is an active-site residue. Serine 295–arginine 301 provides a ligand contact to substrate. GTP is bound by residues arginine 301, lysine 327–aspartate 329, and serine 409–glycine 411.

It belongs to the adenylosuccinate synthetase family. As to quaternary structure, homodimer. Mg(2+) is required as a cofactor.

It localises to the cytoplasm. The catalysed reaction is IMP + L-aspartate + GTP = N(6)-(1,2-dicarboxyethyl)-AMP + GDP + phosphate + 2 H(+). It functions in the pathway purine metabolism; AMP biosynthesis via de novo pathway; AMP from IMP: step 1/2. Functionally, plays an important role in the de novo pathway of purine nucleotide biosynthesis. Catalyzes the first committed step in the biosynthesis of AMP from IMP. This chain is Adenylosuccinate synthetase, found in Borrelia duttonii (strain Ly).